Consider the following 164-residue polypeptide: Endoribonuclease YbeY (164 aa).

3 residues coordinate Zn(2+): His125, His129, and His135.

The protein belongs to the endoribonuclease YbeY family. Requires Zn(2+) as cofactor.

The protein localises to the cytoplasm. Functionally, single strand-specific metallo-endoribonuclease involved in late-stage 70S ribosome quality control and in maturation of the 3' terminus of the 16S rRNA. The protein is Endoribonuclease YbeY of Paramagnetospirillum magneticum (strain ATCC 700264 / AMB-1) (Magnetospirillum magneticum).